Reading from the N-terminus, the 445-residue chain is 3-phosphoshikimate 1-carboxyvinyltransferase (445 aa).

The interval 1–25 is disordered; it reads MSHSDQTSPLEARKSAALSGTARVP. Residues lysine 28, serine 29, and arginine 33 each contribute to the 3-phosphoshikimate site. Residue lysine 28 coordinates phosphoenolpyruvate. Positions 101 and 129 each coordinate phosphoenolpyruvate. 4 residues coordinate 3-phosphoshikimate: serine 175, glutamine 177, aspartate 328, and lysine 355. Glutamine 177 lines the phosphoenolpyruvate pocket. Residue aspartate 328 is the Proton acceptor of the active site. Residues arginine 359 and arginine 402 each coordinate phosphoenolpyruvate.

The protein belongs to the EPSP synthase family. In terms of assembly, monomer.

Its subcellular location is the cytoplasm. The catalysed reaction is 3-phosphoshikimate + phosphoenolpyruvate = 5-O-(1-carboxyvinyl)-3-phosphoshikimate + phosphate. It participates in metabolic intermediate biosynthesis; chorismate biosynthesis; chorismate from D-erythrose 4-phosphate and phosphoenolpyruvate: step 6/7. Its function is as follows. Catalyzes the transfer of the enolpyruvyl moiety of phosphoenolpyruvate (PEP) to the 5-hydroxyl of shikimate-3-phosphate (S3P) to produce enolpyruvyl shikimate-3-phosphate and inorganic phosphate. The protein is 3-phosphoshikimate 1-carboxyvinyltransferase of Rhodopseudomonas palustris (strain BisB5).